Reading from the N-terminus, the 572-residue chain is Glutathione hydrolase 1 (572 aa).

The N-terminal stretch at methionine 1–alanine 22 is a signal peptide. Arginine 99 contributes to the L-glutamate binding site. N-linked (GlcNAc...) asparagine glycans are attached at residues asparagine 171 and asparagine 222. Threonine 368 functions as the Nucleophile in the catalytic mechanism. L-glutamate is bound by residues threonine 386, asparagine 388, glutamate 407, aspartate 410, serine 440–serine 441, and glycine 461–glycine 462. Asparagine 505 carries N-linked (GlcNAc...) asparagine glycosylation. A disordered region spans residues glycine 552–tyrosine 572.

Belongs to the gamma-glutamyltransferase family. In terms of tissue distribution, expressed in embryo, roots and leaves. In mature plants, expression is restricted to vascular tissues of roots, leaves, flowers and siliques.

The protein resides in the secreted. It is found in the extracellular space. Its subcellular location is the apoplast. It carries out the reaction an N-terminal (5-L-glutamyl)-[peptide] + an alpha-amino acid = 5-L-glutamyl amino acid + an N-terminal L-alpha-aminoacyl-[peptide]. The catalysed reaction is glutathione + H2O = L-cysteinylglycine + L-glutamate. It catalyses the reaction an S-substituted glutathione + H2O = an S-substituted L-cysteinylglycine + L-glutamate. It functions in the pathway sulfur metabolism; glutathione metabolism. Functionally, may play a role in preventing oxidative stress by metabolizing extracellular oxidized glutathione (GSSG). The polypeptide is Glutathione hydrolase 1 (GGT1) (Arabidopsis thaliana (Mouse-ear cress)).